Consider the following 260-residue polypeptide: UPF0246 protein Bcep1808_2308 (260 aa).

This sequence belongs to the UPF0246 family.

The chain is UPF0246 protein Bcep1808_2308 from Burkholderia vietnamiensis (strain G4 / LMG 22486) (Burkholderia cepacia (strain R1808)).